Reading from the N-terminus, the 447-residue chain is Argininosuccinate synthase (447 aa).

ATP is bound by residues 17–25 and Ala-43; that span reads AFSGGLDTS. Tyr-99 contacts L-citrulline. 2 residues coordinate ATP: Gly-129 and Thr-131. The L-aspartate site is built by Thr-131, Asn-135, and Asp-136. Asn-135 contacts L-citrulline. Asp-136 contributes to the ATP binding site. Positions 139 and 192 each coordinate L-citrulline. Asp-194 is an ATP binding site. L-citrulline is bound by residues Thr-201, Glu-203, and Glu-280.

The protein belongs to the argininosuccinate synthase family. Type 2 subfamily. In terms of assembly, homotetramer.

The protein resides in the cytoplasm. It catalyses the reaction L-citrulline + L-aspartate + ATP = 2-(N(omega)-L-arginino)succinate + AMP + diphosphate + H(+). It functions in the pathway amino-acid biosynthesis; L-arginine biosynthesis; L-arginine from L-ornithine and carbamoyl phosphate: step 2/3. The chain is Argininosuccinate synthase from Shigella boydii serotype 18 (strain CDC 3083-94 / BS512).